Consider the following 215-residue polypeptide: Ribonuclease T (215 aa).

Positions 20–194 (VVIDVETAGF…YDTERTAVLF (175 aa)) constitute an Exonuclease domain. Mg(2+)-binding residues include Asp-23, Glu-25, His-181, and Asp-186. Residue His-181 is the Proton donor/acceptor of the active site.

This sequence belongs to the RNase T family. In terms of assembly, homodimer. Mg(2+) is required as a cofactor.

Its function is as follows. Trims short 3' overhangs of a variety of RNA species, leaving a one or two nucleotide 3' overhang. Responsible for the end-turnover of tRNA: specifically removes the terminal AMP residue from uncharged tRNA (tRNA-C-C-A). Also appears to be involved in tRNA biosynthesis. In Salmonella choleraesuis (strain SC-B67), this protein is Ribonuclease T.